The primary structure comprises 477 residues: Glutamate--tRNA ligase (477 aa).

A 'HIGH' region motif is present at residues 8-18 (PSPTGTLHIGT). The short motif at 247-251 (KLSKR) is the 'KMSKS' region element. Lys250 contacts ATP.

This sequence belongs to the class-I aminoacyl-tRNA synthetase family. Glutamate--tRNA ligase type 1 subfamily. Monomer.

It is found in the cytoplasm. It carries out the reaction tRNA(Glu) + L-glutamate + ATP = L-glutamyl-tRNA(Glu) + AMP + diphosphate. Its function is as follows. Catalyzes the attachment of glutamate to tRNA(Glu) in a two-step reaction: glutamate is first activated by ATP to form Glu-AMP and then transferred to the acceptor end of tRNA(Glu). In Synechococcus sp. (strain CC9902), this protein is Glutamate--tRNA ligase.